We begin with the raw amino-acid sequence, 545 residues long: Glucose-6-phosphate isomerase (545 aa).

Glu-351 (proton donor) is an active-site residue. Active-site residues include His-382 and Lys-510.

This sequence belongs to the GPI family.

The protein localises to the cytoplasm. The enzyme catalyses alpha-D-glucose 6-phosphate = beta-D-fructose 6-phosphate. Its pathway is carbohydrate biosynthesis; gluconeogenesis. The protein operates within carbohydrate degradation; glycolysis; D-glyceraldehyde 3-phosphate and glycerone phosphate from D-glucose: step 2/4. Catalyzes the reversible isomerization of glucose-6-phosphate to fructose-6-phosphate. In Shewanella sp. (strain MR-4), this protein is Glucose-6-phosphate isomerase.